Reading from the N-terminus, the 380-residue chain is Cytochrome b (380 aa).

The next 4 membrane-spanning stretches (helical) occupy residues 34–54 (FGSLLAVCLITQILTGLLLAM), 78–99 (WLLHNLHANGASFFFICIFLHI), 114–134 (WNTGVVLLLTLMATAFVGYVL), and 179–199 (FFALHFLLPFMIAGITIIHLM). Positions 84 and 98 each coordinate heme b. His-183 and His-197 together coordinate heme b. His-202 is an a ubiquinone binding site. 4 helical membrane passes run 227 to 247 (IKDILGLTIMLTPLLTLTLFS), 289 to 309 (LGGVLALAASVLILLLIPFLH), 321 to 341 (LSQTLFWLLVANLLILTWVGS), and 348 to 368 (FIIIGQMASLSYFTILLILFP).

This sequence belongs to the cytochrome b family. As to quaternary structure, the cytochrome bc1 complex contains 11 subunits: 3 respiratory subunits (MT-CYB, CYC1 and UQCRFS1), 2 core proteins (UQCRC1 and UQCRC2) and 6 low-molecular weight proteins (UQCRH/QCR6, UQCRB/QCR7, UQCRQ/QCR8, UQCR10/QCR9, UQCR11/QCR10 and a cleavage product of UQCRFS1). This cytochrome bc1 complex then forms a dimer. The cofactor is heme b.

Its subcellular location is the mitochondrion inner membrane. Component of the ubiquinol-cytochrome c reductase complex (complex III or cytochrome b-c1 complex) that is part of the mitochondrial respiratory chain. The b-c1 complex mediates electron transfer from ubiquinol to cytochrome c. Contributes to the generation of a proton gradient across the mitochondrial membrane that is then used for ATP synthesis. This is Cytochrome b (MT-CYB) from Meleagris gallopavo (Wild turkey).